The sequence spans 28 residues: Alpha-(1-6)-linked fucose-specific lectin (28 aa).

As to quaternary structure, homohexamer. Expressed by mycelium-forming spores.

The protein localises to the secreted. Its function is as follows. Alpha-(1-6)-linked L-fucose specific lectin. The polypeptide is Alpha-(1-6)-linked fucose-specific lectin (Rhizopus stolonifer (Rhizopus nigricans)).